We begin with the raw amino-acid sequence, 145 residues long: Bacilliredoxin BH2759 (145 aa).

It belongs to the bacilliredoxin family.

This chain is Bacilliredoxin BH2759, found in Halalkalibacterium halodurans (strain ATCC BAA-125 / DSM 18197 / FERM 7344 / JCM 9153 / C-125) (Bacillus halodurans).